An 859-amino-acid chain; its full sequence is Chitin synthase 1 (859 aa).

A disordered region spans residues 1–22 (MRRWFKKTLPRPPDEEESAGLT). The next 5 membrane-spanning stretches (helical) occupy residues 544-564 (LATI…FYIL), 615-635 (MVIM…WIAY), 662-682 (FINI…VSII), 793-813 (YVVL…LSIP), and 833-853 (LWSV…YLFI).

The protein belongs to the chitin synthase family.

The protein resides in the cell membrane. It catalyses the reaction [(1-&gt;4)-N-acetyl-beta-D-glucosaminyl](n) + UDP-N-acetyl-alpha-D-glucosamine = [(1-&gt;4)-N-acetyl-beta-D-glucosaminyl](n+1) + UDP + H(+). Functionally, polymerizes chitin, a structural polymer of the cell wall and septum, by transferring the sugar moiety of UDP-GlcNAc to the non-reducing end of the growing chitin polymer. The sequence is that of Chitin synthase 1 (chs1) from Schizosaccharomyces pombe (strain 972 / ATCC 24843) (Fission yeast).